Here is a 427-residue protein sequence, read N- to C-terminus: Serine--tRNA ligase (427 aa).

231–233 (TAE) provides a ligand contact to L-serine. 262–264 (RSE) lines the ATP pocket. Residue E285 participates in L-serine binding. 349–352 (EISS) provides a ligand contact to ATP. Position 385 (S385) interacts with L-serine.

Belongs to the class-II aminoacyl-tRNA synthetase family. Type-1 seryl-tRNA synthetase subfamily. As to quaternary structure, homodimer. The tRNA molecule binds across the dimer.

Its subcellular location is the cytoplasm. The enzyme catalyses tRNA(Ser) + L-serine + ATP = L-seryl-tRNA(Ser) + AMP + diphosphate + H(+). It carries out the reaction tRNA(Sec) + L-serine + ATP = L-seryl-tRNA(Sec) + AMP + diphosphate + H(+). Its pathway is aminoacyl-tRNA biosynthesis; selenocysteinyl-tRNA(Sec) biosynthesis; L-seryl-tRNA(Sec) from L-serine and tRNA(Sec): step 1/1. Functionally, catalyzes the attachment of serine to tRNA(Ser). Is also able to aminoacylate tRNA(Sec) with serine, to form the misacylated tRNA L-seryl-tRNA(Sec), which will be further converted into selenocysteinyl-tRNA(Sec). The sequence is that of Serine--tRNA ligase from Brucella abortus (strain S19).